The primary structure comprises 612 residues: RNA polymerase sigma factor RpoD (612 aa).

The span at 191–206 (QQNNEEDEENNQEDHE) shows a compositional bias: acidic residues. The disordered stretch occupies residues 191–210 (QQNNEEDEENNQEDHEDDHS). The tract at residues 378–448 (MVEANLRLVI…TRSIADQART (71 aa)) is sigma-70 factor domain-2. The short motif at 402–405 (DLIQ) is the Interaction with polymerase core subunit RpoC element. A sigma-70 factor domain-3 region spans residues 457–533 (ETINKLNRIS…DTTLELPLDS (77 aa)). The tract at residues 546-599 (VLSGLTAREAKVLRMRFGIDMNTDHTLEEVGKQFDVTRERIRQIEAKALRKLRH) is sigma-70 factor domain-4. Positions 572–591 (LEEVGKQFDVTRERIRQIEA) form a DNA-binding region, H-T-H motif.

This sequence belongs to the sigma-70 factor family. RpoD/SigA subfamily. Interacts transiently with the RNA polymerase catalytic core.

The protein resides in the cytoplasm. In terms of biological role, sigma factors are initiation factors that promote the attachment of RNA polymerase to specific initiation sites and are then released. This sigma factor is the primary sigma factor during exponential growth. This Buchnera aphidicola subsp. Acyrthosiphon pisum (strain APS) (Acyrthosiphon pisum symbiotic bacterium) protein is RNA polymerase sigma factor RpoD.